The chain runs to 222 residues: Transmembrane protein 54 (222 aa).

4 helical membrane-spanning segments follow: residues 22–42 (LVLVVLGHVSFITAALFHGTV), 62–82 (ILSVTSAIVVITSGIAAIVLS), 100–120 (ACALLSLTCALGLLASIAMTF), and 155–175 (SSLCLWGIALVLCVAENVFAV).

Belongs to the TMEM54 family. As to expression, ubiquitously expressed in cancer cell lines.

Its subcellular location is the membrane. The chain is Transmembrane protein 54 (TMEM54) from Homo sapiens (Human).